The chain runs to 94 residues: Ammonia regulation of amino acid uptake protein (94 aa).

2 consecutive repeats follow at residues 48-57 (HHQIRRRTHQ) and 58-67 (HHQIRRRTHQ).

Involved in ammonia regulation of the GAP1 permease. This Saccharomyces cerevisiae (strain ATCC 204508 / S288c) (Baker's yeast) protein is Ammonia regulation of amino acid uptake protein (AUA1).